A 1268-amino-acid chain; its full sequence is Vigilin (1268 aa).

Ser2 is modified (N-acetylserine). Thr8 carries the phosphothreonine modification. Phosphoserine is present on residues Ser11, Ser31, and Ser35. KH domains follow at residues 158-229, 230-302, 303-371, 372-442, 443-514, 515-588, 589-660, 661-734, 735-807, 808-880, 881-979, 980-1059, 1060-1134, and 1135-1209; these read PKEH…RLEV, EKAF…AVEV, KKSQ…SVAA, PSWL…EINI, DHKF…DLII, EQRF…SVPI, FKQF…EVSI, PAKL…DIRA, KPEY…SMLV, DPKH…ECAI, PQKF…EVEV, PFDL…SVTV, DPKY…DVPL, and DHRV…ALQV. Phosphothreonine occurs at positions 295 and 296. At Ser317 the chain carries Phosphoserine. Residue Tyr437 is modified to Phosphotyrosine. The residue at position 645 (Ser645) is a Phosphoserine. Residues 910–947 are disordered; it reads PDREENPVHSTEPAVQENGDEAGEGREAKDSDPGSPRR. Over residues 932 to 947 the composition is skewed to basic and acidic residues; the sequence is GEGREAKDSDPGSPRR. Lys991 is modified (N6-acetyllysine). Residues 1237–1249 are compositionally biased toward polar residues; that stretch reads SSEKAPDMSSSEE. Residues 1237-1268 form a disordered region; the sequence is SSEKAPDMSSSEEFPSFGAQVAPKTLPWGPKR. Phosphoserine is present on residues Ser1247 and Ser1252.

Its subcellular location is the cytoplasm. The protein localises to the nucleus. Appears to play a role in cell sterol metabolism. It may function to protect cells from over-accumulation of cholesterol. In Pongo abelii (Sumatran orangutan), this protein is Vigilin (HDLBP).